The following is a 340-amino-acid chain: tRNA N6-adenosine threonylcarbamoyltransferase (340 aa).

Positions 115 and 119 each coordinate Fe cation. Residues 137 to 141 (IVSGG), D170, G183, D187, and N276 each bind substrate. Fe cation is bound at residue D304.

It belongs to the KAE1 / TsaD family. It depends on Fe(2+) as a cofactor.

The protein localises to the cytoplasm. The catalysed reaction is L-threonylcarbamoyladenylate + adenosine(37) in tRNA = N(6)-L-threonylcarbamoyladenosine(37) in tRNA + AMP + H(+). In terms of biological role, required for the formation of a threonylcarbamoyl group on adenosine at position 37 (t(6)A37) in tRNAs that read codons beginning with adenine. Is involved in the transfer of the threonylcarbamoyl moiety of threonylcarbamoyl-AMP (TC-AMP) to the N6 group of A37, together with TsaE and TsaB. TsaD likely plays a direct catalytic role in this reaction. This chain is tRNA N6-adenosine threonylcarbamoyltransferase, found in Staphylococcus epidermidis (strain ATCC 35984 / DSM 28319 / BCRC 17069 / CCUG 31568 / BM 3577 / RP62A).